Here is a 318-residue protein sequence, read N- to C-terminus: Protein FAM228A (318 aa).

Residues 259-297 (SQESKRHEKKGLALGTGQHRPRSWAAGEGQQRRRSQPVD) form a disordered region.

This sequence belongs to the FAM228 family.

This chain is Protein FAM228A (FAM228A), found in Bos taurus (Bovine).